Reading from the N-terminus, the 728-residue chain is 1,4-alpha-glucan branching enzyme GlgB (728 aa).

Aspartate 405 functions as the Nucleophile in the catalytic mechanism. Glutamate 458 serves as the catalytic Proton donor.

This sequence belongs to the glycosyl hydrolase 13 family. GlgB subfamily. In terms of assembly, monomer.

It carries out the reaction Transfers a segment of a (1-&gt;4)-alpha-D-glucan chain to a primary hydroxy group in a similar glucan chain.. The protein operates within glycan biosynthesis; glycogen biosynthesis. In terms of biological role, catalyzes the formation of the alpha-1,6-glucosidic linkages in glycogen by scission of a 1,4-alpha-linked oligosaccharide from growing alpha-1,4-glucan chains and the subsequent attachment of the oligosaccharide to the alpha-1,6 position. The polypeptide is 1,4-alpha-glucan branching enzyme GlgB (Escherichia coli O1:K1 / APEC).